The primary structure comprises 146 residues: Coactosin (146 aa).

The ADF-H domain occupies 1 to 132 (MADVSSTELK…NEEELMTKVR (132 aa)).

It belongs to the actin-binding proteins ADF family. Coactosin subfamily. The N-terminus is blocked.

The protein resides in the cytoplasm. The protein localises to the cytoskeleton. Its function is as follows. Binds to F-actin in a calcium independent manner. Binds to the filaments along their length. The protein is Coactosin (coaA) of Dictyostelium discoideum (Social amoeba).